A 379-amino-acid polypeptide reads, in one-letter code: Glucose-1-phosphate adenylyltransferase (379 aa).

Alpha-D-glucose 1-phosphate-binding positions include Gly164, 179–180 (EK), and Ser190.

Belongs to the bacterial/plant glucose-1-phosphate adenylyltransferase family. As to quaternary structure, homotetramer.

The enzyme catalyses alpha-D-glucose 1-phosphate + ATP + H(+) = ADP-alpha-D-glucose + diphosphate. The protein operates within glycan biosynthesis; glycogen biosynthesis. Functionally, involved in the biosynthesis of ADP-glucose, a building block required for the elongation reactions to produce glycogen. Catalyzes the reaction between ATP and alpha-D-glucose 1-phosphate (G1P) to produce pyrophosphate and ADP-Glc. In Lactiplantibacillus plantarum (strain ATCC BAA-793 / NCIMB 8826 / WCFS1) (Lactobacillus plantarum), this protein is Glucose-1-phosphate adenylyltransferase.